The sequence spans 367 residues: MEQYKFILSGGGTGGHIYPAIAIANELKSRFPNCKILFVGAKDKMEMQKVPQAGYDIKGLSIAGLQRKITLQNAMFPFKLLSSLVKSFGIVQQFKPDVVIGTGGFASGAVLKVASILGIATVIQEQNSYPGITNKLLSKKANKICVAYENLEQFFPKDKMILTGNPVRQDLISVDGKRNEAIDYFKLDANKKTILILGGSLGARRINQLIAKEIDWLLSQNVQIIWQCGKLYFEDYKPFSGKENVQILSFIDRMDLVYAAADIVISRSGASSVSELAIVGKPVIFIPSPNVAEDHQTKNAQAIVNKQGAILLKESQLDSEFKFVFESLLNDKAKQEDLSKNIKQLALPNATKDIVDEIIKLVESQKS.

Residues 13–15, Asn-127, Arg-168, Ser-200, Ile-251, and Gln-296 contribute to the UDP-N-acetyl-alpha-D-glucosamine site; that span reads TGG.

Belongs to the glycosyltransferase 28 family. MurG subfamily.

It is found in the cell inner membrane. It carries out the reaction di-trans,octa-cis-undecaprenyl diphospho-N-acetyl-alpha-D-muramoyl-L-alanyl-D-glutamyl-meso-2,6-diaminopimeloyl-D-alanyl-D-alanine + UDP-N-acetyl-alpha-D-glucosamine = di-trans,octa-cis-undecaprenyl diphospho-[N-acetyl-alpha-D-glucosaminyl-(1-&gt;4)]-N-acetyl-alpha-D-muramoyl-L-alanyl-D-glutamyl-meso-2,6-diaminopimeloyl-D-alanyl-D-alanine + UDP + H(+). Its pathway is cell wall biogenesis; peptidoglycan biosynthesis. Cell wall formation. Catalyzes the transfer of a GlcNAc subunit on undecaprenyl-pyrophosphoryl-MurNAc-pentapeptide (lipid intermediate I) to form undecaprenyl-pyrophosphoryl-MurNAc-(pentapeptide)GlcNAc (lipid intermediate II). This is UDP-N-acetylglucosamine--N-acetylmuramyl-(pentapeptide) pyrophosphoryl-undecaprenol N-acetylglucosamine transferase from Flavobacterium psychrophilum (strain ATCC 49511 / DSM 21280 / CIP 103535 / JIP02/86).